The sequence spans 326 residues: Probable iron chelatin transport system permease protein HP_0889 (326 aa).

Helical transmembrane passes span 7–27 (IALA…ESLS), 64–84 (ILAL…QTIF), 91–111 (PFLL…IAVV), 113–133 (SNIA…VLAM), 142–162 (LSLV…AGAI), 164–184 (FFVI…SLSL), 187–207 (YKDC…LFLL), 241–261 (VASA…LVIP), 275–295 (LLLS…VVAK), and 301–321 (DLPV…WLLF).

Belongs to the binding-protein-dependent transport system permease family. FecCD subfamily.

It is found in the cell inner membrane. Functionally, part of a binding-protein-dependent transport system for an iron chelatin; probably responsible for the translocation of the substrate across the membrane. This chain is Probable iron chelatin transport system permease protein HP_0889, found in Helicobacter pylori (strain ATCC 700392 / 26695) (Campylobacter pylori).